Reading from the N-terminus, the 125-residue chain is Late genes activator (125 aa).

The segment at residues 77–96 (RGFHAWLKGVNTTWQEIHVY) is a DNA-binding region (H-T-H motif).

The protein belongs to the podoviruses GP4 family.

Functionally, this protein is believed to be a positive regulator of late transcription. It may function as a sigma-like component of the host RNA polymerase. Binds to a region of the A3 promoter located between nucleotides -50 and -100 relative to the transcription start site, that presents a sequence-directed curvature. Full induction of this curvature is needed for the transcription activation process. In Bacillus subtilis (Bacteriophage Nf), this protein is Late genes activator (4).